We begin with the raw amino-acid sequence, 182 residues long: Keratin, ultra high-sulfur matrix protein (182 aa).

It belongs to the KRTAP type 5 family. As to expression, cuticle layers of differentiating wool follicles.

In terms of biological role, the keratin products of mammalian epidermal derivatives such as wool and hair consist of microfibrils embedded in a rigid matrix of other proteins. The matrix proteins include the high-sulfur and high-tyrosine keratins, having molecular weights of 6-20 kDa, whereas the microfibrils contain the larger, low-sulfur keratins (40-56 kDa). The polypeptide is Keratin, ultra high-sulfur matrix protein (Ovis aries (Sheep)).